The primary structure comprises 513 residues: Maturase K (513 aa).

Belongs to the intron maturase 2 family. MatK subfamily.

The protein localises to the plastid. It is found in the chloroplast. Functionally, usually encoded in the trnK tRNA gene intron. Probably assists in splicing its own and other chloroplast group II introns. The protein is Maturase K of Panicum capillare (Witchgrass).